The primary structure comprises 539 residues: Chaperonin GroEL (539 aa).

ATP-binding positions include Thr-29–Pro-32, Asp-86–Thr-90, Gly-413, Asp-477–Leu-479, and Asp-493.

The protein belongs to the chaperonin (HSP60) family. In terms of assembly, forms a cylinder of 14 subunits composed of two heptameric rings stacked back-to-back. Interacts with the co-chaperonin GroES.

The protein localises to the cytoplasm. It catalyses the reaction ATP + H2O + a folded polypeptide = ADP + phosphate + an unfolded polypeptide.. Functionally, together with its co-chaperonin GroES, plays an essential role in assisting protein folding. The GroEL-GroES system forms a nano-cage that allows encapsulation of the non-native substrate proteins and provides a physical environment optimized to promote and accelerate protein folding. The polypeptide is Chaperonin GroEL (Clostridium perfringens (strain ATCC 13124 / DSM 756 / JCM 1290 / NCIMB 6125 / NCTC 8237 / Type A)).